The sequence spans 575 residues: Chaperonin CPN60-2, mitochondrial (575 aa).

The transit peptide at 1-32 (MHRFASGLASKARLARKGANQIASRSSWSRNY) directs the protein to the mitochondrion.

Belongs to the chaperonin (HSP60) family.

It localises to the mitochondrion. Its function is as follows. Implicated in mitochondrial protein import and macromolecular assembly. May facilitate the correct folding of imported proteins. May also prevent misfolding and promote the refolding and proper assembly of unfolded polypeptides generated under stress conditions in the mitochondrial matrix. The chain is Chaperonin CPN60-2, mitochondrial (CPN60-2) from Cucurbita maxima (Pumpkin).